The sequence spans 696 residues: Methionine--tRNA ligase (696 aa).

A 'HIGH' region motif is present at residues 12–22 (PYANGAIHLGH). Positions 143, 146, 156, and 159 each coordinate Zn(2+). A 'KMSKS' region motif is present at residues 336-340 (KMSKS). K339 is an ATP binding site. The disordered stretch occupies residues 556–580 (SLAPAPEAQSQQRHAEHQQNEVTAE). One can recognise a tRNA-binding domain in the interval 591 to 696 (DFMKVDLRIV…SGAQPGMRVK (106 aa)).

The protein belongs to the class-I aminoacyl-tRNA synthetase family. MetG type 1 subfamily. As to quaternary structure, homodimer. Requires Zn(2+) as cofactor.

It localises to the cytoplasm. It catalyses the reaction tRNA(Met) + L-methionine + ATP = L-methionyl-tRNA(Met) + AMP + diphosphate. In terms of biological role, is required not only for elongation of protein synthesis but also for the initiation of all mRNA translation through initiator tRNA(fMet) aminoacylation. This chain is Methionine--tRNA ligase, found in Dechloromonas aromatica (strain RCB).